Here is a 236-residue protein sequence, read N- to C-terminus: Ribonuclease 3 (236 aa).

Residues 8 to 130 (FRRLSQALDY…TFAAVSFDAD (123 aa)) enclose the RNase III domain. Glu-43 lines the Mg(2+) pocket. The active site involves Asp-47. 2 residues coordinate Mg(2+): Asp-116 and Glu-119. The active site involves Glu-119. Positions 157 to 227 (DAKTRLQEAL…AEAALTLLEQ (71 aa)) constitute a DRBM domain.

Belongs to the ribonuclease III family. Homodimer. Mg(2+) is required as a cofactor.

Its subcellular location is the cytoplasm. The catalysed reaction is Endonucleolytic cleavage to 5'-phosphomonoester.. Its function is as follows. Digests double-stranded RNA. Involved in the processing of primary rRNA transcript to yield the immediate precursors to the large and small rRNAs (23S and 16S). Processes some mRNAs, and tRNAs when they are encoded in the rRNA operon. Processes pre-crRNA and tracrRNA of type II CRISPR loci if present in the organism. In Chromobacterium violaceum (strain ATCC 12472 / DSM 30191 / JCM 1249 / CCUG 213 / NBRC 12614 / NCIMB 9131 / NCTC 9757 / MK), this protein is Ribonuclease 3.